Reading from the N-terminus, the 525-residue chain is Probable histidine ammonia-lyase (525 aa).

The segment at residues 145 to 147 (ASG) is a cross-link (5-imidazolinone (Ala-Gly)). Ser146 bears the 2,3-didehydroalanine (Ser) mark.

It belongs to the PAL/histidase family. Contains an active site 4-methylidene-imidazol-5-one (MIO), which is formed autocatalytically by cyclization and dehydration of residues Ala-Ser-Gly.

The protein resides in the cytoplasm. The catalysed reaction is L-histidine = trans-urocanate + NH4(+). It participates in amino-acid degradation; L-histidine degradation into L-glutamate; N-formimidoyl-L-glutamate from L-histidine: step 1/3. In Halobacterium salinarum (strain ATCC 29341 / DSM 671 / R1), this protein is Probable histidine ammonia-lyase.